Here is a 420-residue protein sequence, read N- to C-terminus: Glycogen synthase kinase-3 beta (420 aa).

A compositionally biased stretch (polar residues) spans 1-22 (MSGRPRTTSFAESCKPVQQPSA). The tract at residues 1-35 (MSGRPRTTSFAESCKPVQQPSAFGSMKVSRDKDGS) is disordered. At serine 9 the chain carries Phosphoserine; by PKB/AKT1, RPS6KA3 and SGK3. Cysteine 14 carries the S-palmitoyl cysteine lipid modification. Residues 56–340 (YTDTKVIGNG…PLEACAHSFF (285 aa)) enclose the Protein kinase domain. Residues 62–70 (IGNGSFGVV) and lysine 85 each bind ATP. The Proton acceptor role is filled by aspartate 181. Tyrosine 216 is subject to Phosphotyrosine. 2 stretches are compositionally biased toward low complexity: residues 387 to 401 (AAST…SDAN) and 409 to 420 (NNAAFASASNST). The interval 387–420 (AASTPTNATAASDANAGDRGQTNNAAFASASNST) is disordered. Phosphoserine is present on serine 389. Threonine 390 carries the phosphothreonine modification.

It belongs to the protein kinase superfamily. CMGC Ser/Thr protein kinase family. GSK-3 subfamily. In terms of assembly, monomer. Interacts with DAB2IP (via C2 domain); the interaction stimulates GSK3B kinase activation. Interacts (via C2 domain) with PPP2CA. Interacts with ARRB2, AXIN1, CABYR, DISC1, MMP2, MUC1, NIN, PRUNE1 and ZBED3. Interacts with AXIN1; the interaction mediates hyperphosphorylation of CTNNB1 leading to its ubiquitination and destruction. Interacts with and phosphorylates SNAI1. Interacts with DNM1L (via a C-terminal domain). Found in a complex composed of MACF1, APC, AXIN1, CTNNB1 and GSK3B. Interacts with SGK3. Interacts with the CLOCK-BMAL1 heterodimer. Interacts with the BMAL1. Interacts with CTNND2. The complex composed, at least, of APC, CTNNB1 and GSK3B interacts with JPT1; the interaction requires the inactive form of GSK3B (phosphorylated at 'Ser-9'). Forms a complex composed of PRKAR2A or PRKAR2B, GSK3B and GSKIP through GSKIP interaction; facilitates PKA-induced phosphorylation and regulates GSK3B activity. Interacts with GSKIP. Interacts with GID8. Interacts with PIWIL2. Interacts with LMBR1L. Interacts with DDX3X. Interacts with BIRC2. Interacts with TNFRSF10B; TNFRSF10B stimulation inhibits GSK3B kinase activity. Found in a complex with SLC39A6, SLC39A10 and with GSK3B that controls NCAM1 phosphorylation. Interacts with PKP3 (via ARM repeats); the interaction may be involved in PKP3 protein degradation. Phosphorylated by AKT1 and ILK1. Upon insulin-mediated signaling, the activated PKB/AKT1 and RPS6KA3 protein kinases phosphorylate and deactivate GSK3B, resulting in the dephosphorylation and activation of GYS1. Activated by phosphorylation at Tyr-216. Inactivated by phosphorylation at Ser-9. In terms of processing, mono-ADP-ribosylation by PARP10 negatively regulates kinase activity. Post-translationally, palmitoylated. Palmitoylation by ZDHHC4 prevents AKT1-mediated phosphorylation.

Its subcellular location is the cytoplasm. It localises to the nucleus. The protein resides in the cell membrane. The enzyme catalyses L-seryl-[tau protein] + ATP = O-phospho-L-seryl-[tau protein] + ADP + H(+). It carries out the reaction L-threonyl-[tau protein] + ATP = O-phospho-L-threonyl-[tau protein] + ADP + H(+). The catalysed reaction is L-seryl-[protein] + ATP = O-phospho-L-seryl-[protein] + ADP + H(+). It catalyses the reaction L-threonyl-[protein] + ATP = O-phospho-L-threonyl-[protein] + ADP + H(+). Its activity is regulated as follows. Activated by phosphorylation at Tyr-216. In response to insulin, inhibited by phosphorylation at Ser-9 by PKB/AKT1; phosphorylation at this site causes a conformational change, preventing access of substrates to the active site. Inhibited by IL22 treatment which also triggers phosphorylation at Ser-9, promoting inactivation. Inhibited by lithium. In terms of biological role, constitutively active protein kinase that acts as a negative regulator in the hormonal control of glucose homeostasis, Wnt signaling and regulation of transcription factors and microtubules, by phosphorylating and inactivating glycogen synthase (GYS1 or GYS2), EIF2B, CTNNB1/beta-catenin, APC, AXIN1, DPYSL2/CRMP2, JUN, NFATC1/NFATC, MAPT/TAU and MACF1. Requires primed phosphorylation of the majority of its substrates. In skeletal muscle, contributes to insulin regulation of glycogen synthesis by phosphorylating and inhibiting GYS1 activity and hence glycogen synthesis. May also mediate the development of insulin resistance by regulating activation of transcription factors. Regulates protein synthesis by controlling the activity of initiation factor 2B (EIF2BE/EIF2B5) in the same manner as glycogen synthase. In Wnt signaling, GSK3B forms a multimeric complex with APC, AXIN1 and CTNNB1/beta-catenin and phosphorylates the N-terminus of CTNNB1 leading to its degradation mediated by ubiquitin/proteasomes. Phosphorylates JUN at sites proximal to its DNA-binding domain, thereby reducing its affinity for DNA. Phosphorylates NFATC1/NFATC on conserved serine residues promoting NFATC1/NFATC nuclear export, shutting off NFATC1/NFATC gene regulation, and thereby opposing the action of calcineurin. Phosphorylates MAPT/TAU on 'Thr-548', decreasing significantly MAPT/TAU ability to bind and stabilize microtubules. MAPT/TAU is the principal component of neurofibrillary tangles in Alzheimer disease. Plays an important role in ERBB2-dependent stabilization of microtubules at the cell cortex. Phosphorylates MACF1, inhibiting its binding to microtubules which is critical for its role in bulge stem cell migration and skin wound repair. Probably regulates NF-kappa-B (NFKB1) at the transcriptional level and is required for the NF-kappa-B-mediated anti-apoptotic response to TNF-alpha (TNF/TNFA). Negatively regulates replication in pancreatic beta-cells, resulting in apoptosis, loss of beta-cells and diabetes. Through phosphorylation of the anti-apoptotic protein MCL1, may control cell apoptosis in response to growth factors deprivation. Phosphorylates MUC1 in breast cancer cells, decreasing the interaction of MUC1 with CTNNB1/beta-catenin. Is necessary for the establishment of neuronal polarity and axon outgrowth. Phosphorylates MARK2, leading to inhibition of its activity. Phosphorylates SIK1 at 'Thr-182', leading to sustainment of its activity. Phosphorylates ZC3HAV1 which enhances its antiviral activity. Phosphorylates SNAI1, leading to its ubiquitination and proteasomal degradation. Phosphorylates SFPQ at 'Thr-687' upon T-cell activation. Phosphorylates NR1D1 st 'Ser-55' and 'Ser-59' and stabilizes it by protecting it from proteasomal degradation. Regulates the circadian clock via phosphorylation of the major clock components including BMAL1, CLOCK and PER2. Phosphorylates CLOCK AT 'Ser-427' and targets it for proteasomal degradation. Phosphorylates BMAL1 at 'Ser-17' and 'Ser-21' and primes it for ubiquitination and proteasomal degradation. Phosphorylates FBXL2 at 'Thr-404' and primes it for ubiquitination by the SCF(FBXO3) complex and proteasomal degradation. Phosphorylates OGT at 'Ser-3' or 'Ser-4' which positively regulates its activity. Phosphorylates MYCN in neuroblastoma cells which may promote its degradation. Regulates the circadian rhythmicity of hippocampal long-term potentiation and BMAL1 and PER2 expression. Acts as a regulator of autophagy by mediating phosphorylation of KAT5/TIP60 under starvation conditions, activating KAT5/TIP60 acetyltransferase activity and promoting acetylation of key autophagy regulators, such as ULK1 and RUBCNL/Pacer. Negatively regulates extrinsic apoptotic signaling pathway via death domain receptors. Promotes the formation of an anti-apoptotic complex, made of DDX3X, BRIC2 and GSK3B, at death receptors, including TNFRSF10B. The anti-apoptotic function is most effective with weak apoptotic signals and can be overcome by stronger stimulation. Phosphorylates E2F1, promoting the interaction between E2F1 and USP11, stabilizing E2F1 and promoting its activity. Phosphorylates mTORC2 complex component RICTOR at 'Ser-1235' in response to endoplasmic stress, inhibiting mTORC2. Phosphorylates FXR1, promoting FXR1 ubiquitination by the SCF(FBXO4) complex and FXR1 degradation by the proteasome. Phosphorylates interleukin-22 receptor subunit IL22RA1, preventing its proteasomal degradation. This is Glycogen synthase kinase-3 beta from Spermophilus citellus (European ground squirrel).